A 591-amino-acid chain; its full sequence is Proteasome-associated ATPase (591 aa).

The stretch at 10-77 (VAAAEELHAL…LREEVDRLGQ (68 aa)) forms a coiled coil. Position 278–283 (278–283 (GCGKTL)) interacts with ATP. Positions 590-591 (YL) are docks into pockets in the proteasome alpha-ring.

It belongs to the AAA ATPase family. In terms of assembly, homohexamer. Assembles into a hexameric ring structure that likely caps the 20S proteasome core. Can form a complex composed of two stacked hexameric rings in vitro. Probably interacts with the prokaryotic ubiquitin-like protein Pup through a hydrophobic interface; the expected interacting region of ARC lies in its N-terminal coiled-coil domain. There is likely one Pup binding site per ARC hexamer ring. Upon ATP-binding, the C-terminus of ARC probably interacts with the alpha-rings of the proteasome core, possibly by binding to the intersubunit pockets.

It functions in the pathway protein degradation; proteasomal Pup-dependent pathway. With respect to regulation, ATPase activity is inhibited by N-ethylmaleimide (NEM) but not by sodium azide. Its function is as follows. ATPase which is responsible for recognizing, binding, unfolding and translocation of pupylated proteins into the bacterial 20S proteasome core particle. May be essential for opening the gate of the 20S proteasome via an interaction with its C-terminus, thereby allowing substrate entry and access to the site of proteolysis. Thus, the C-termini of the proteasomal ATPase may function like a 'key in a lock' to induce gate opening and therefore regulate proteolysis. In Rhodococcus erythropolis (Arthrobacter picolinophilus), this protein is Proteasome-associated ATPase.